We begin with the raw amino-acid sequence, 235 residues long: Orotidine 5'-phosphate decarboxylase (235 aa).

Substrate contacts are provided by residues Asp-9, Lys-31, 58–67 (DLKFHDIPNT), Thr-121, Arg-180, Gln-190, Gly-210, and Arg-211. Lys-60 serves as the catalytic Proton donor.

This sequence belongs to the OMP decarboxylase family. Type 1 subfamily. In terms of assembly, homodimer.

The catalysed reaction is orotidine 5'-phosphate + H(+) = UMP + CO2. It participates in pyrimidine metabolism; UMP biosynthesis via de novo pathway; UMP from orotate: step 2/2. In terms of biological role, catalyzes the decarboxylation of orotidine 5'-monophosphate (OMP) to uridine 5'-monophosphate (UMP). The chain is Orotidine 5'-phosphate decarboxylase from Nitratidesulfovibrio vulgaris (strain ATCC 29579 / DSM 644 / CCUG 34227 / NCIMB 8303 / VKM B-1760 / Hildenborough) (Desulfovibrio vulgaris).